A 2971-amino-acid chain; its full sequence is uncharacterized protein (2971 aa).

A disordered region spans residues 929 to 964 (SANFSNGPEESSLSTRLHIQKKRKAKKQRLETRRQK). A compositionally biased stretch (polar residues) spans 936 to 945 (PEESSLSTRL). The span at 946–955 (HIQKKRKAKK) shows a compositional bias: basic residues.

It localises to the plastid. The protein resides in the chloroplast. This is an uncharacterized protein from Chlamydomonas reinhardtii (Chlamydomonas smithii).